A 1294-amino-acid chain; its full sequence is MAKVRAALDRITDPSVKAVLNEEAYSHIRPVLRESLTNNPYAIAPDAADTLEKYGIATNPFAVKVHSHGAVKSIENTLLERVGFNLPKEPCIFLFLKRSKLRYLRRGPSNKDIFINLAIEPRDLQRYEEDTLVESWTRITTRYAYISDTLHFFTRKMLADLFFHNPALDVLYATLVLPPEALHKHPSIEPDLYTINYNFNGFQYIPGNHGGGSYSHEFKQLEWLKVGHLKSPELSLTFQMIESIGANHLFMITRGIKITPRVRTFTKDSYVLFPQIFHPRNLNPSKPFPKVKAMQLFTYVKSVKNPTERDIYAKIRQLIKTSELSDYHPDEIVHIVNYFVFISKLDSINSYSDILSLPIWSKALLPIKTKITQLWEKLTGARAFNQLLDALQWKTFTYSLEVVDFSTAPSQRDCFMEDERLETDTLEDEVSQNANNNKPTSLQNIEEAVKNNPDLPWAPWLLILQAHNADCTQKQYDPENNLILPIQEINTLPKHQHPDIPTDLLTLLTKLHREPTTVPLDNHRARAYGSDVKNLRIGALLKKQSKDWLASFALKTENIERQVLMSVIHGAGGSGKSHAIQTWMRSLNRRDRHVTIILPTTDLRNDWTTKVPNLEQANFKTFEKALCQPCGKIIVFDDYSKLPQGYIEAFLAINQNVILAILTGDSKQSFHHESNEDAYTATLEPSINTYQPFCRYYLNITHRNKPDLANKLGVYSCSSGTTSFTMSSQALKGMPILSPSIMKKTALGEMGQKSMTYAGCQGLTTKAVQILLDTNTPLCSSNVIYTALSRAVDHIHFINTGPNSTDFWEKLDSTPYLKTFLDCVREERMNEIVAVEEPPAPVPAPTTHFPKVNPTTVIESYVHDLPEKHGREIFSETHGHSNAIQTDNPVVQLFPHQQAKDETLYWATIEARLQCTSSEENLKEFHLKHDIGDILFLNYKQAMNLPQDPIPFNPDLWTLCKQEIENTYLKKSAAALVNAATRQSPDFDSHAIALFLKSQWVKKTEKIGCLKIKAGQTIAAFMQQTVMIYGTMARYMRKFRNQYCPRKIFVNCETTPADFNSFILDEWNFNRTCFSNDFTAFDQSQDGSILQFEVIKAKFHNIPEDIIEGYIQIKTHAKIFLGTLSIMRLSGEGPTFDANTEANIAYTHTKFNIPCDAAQVYAGDDMSIDYVASVKPSFNMIEHLMKLKGKPVFNTQTQGDFAEFCGWTISPKGIIKKPEKMNMSIELQKNINKFHEVKRSYALDHAFAYQLGDELHELYNESEAEHHQLATRSLILAGQATALDILDYGLRDLK.

Residues 59 to 224 enclose the Alphavirus-like MT domain; it reads NPFAVKVHSH…SHEFKQLEWL (166 aa). A (+)RNA virus helicase ATP-binding domain is found at 541 to 698; sequence LKKQSKDWLA…TYQPFCRYYL (158 aa). ATP is bound at residue 570-577; that stretch reads GAGGSGKS. The region spanning 699-832 is the (+)RNA virus helicase C-terminal domain; sequence NITHRNKPDL…CVREERMNEI (134 aa). Residues 1071–1178 enclose the RdRp catalytic domain; sequence RTCFSNDFTA…DYVASVKPSF (108 aa).

The protein belongs to the potexvirus/carlavirus RNA replication protein family.

It catalyses the reaction RNA(n) + a ribonucleoside 5'-triphosphate = RNA(n+1) + diphosphate. The catalysed reaction is ATP + H2O = ADP + phosphate + H(+). In terms of biological role, RNA replication. The central part of this protein possibly functions as an ATP-binding helicase. This Trifolium (WCMV) protein is RNA replication protein.